A 483-amino-acid chain; its full sequence is MSKLQDRHGGEAAADVGRRARHQRLLLSFPVFPIVLLLLAPCTIFFFTSGDVPLPRIRIEYARRDAPTITAVAADTSPPPPSPPSSSPPPLSFPPPPPPPSSPPPPALPVVDDHSDTQRSLRRLRQLTDSPYTLGPAVTGYDARRAEWLRDHTEFPASVGRGRPRVLMVTGSAPRRCKDPEGDHLLLRALKNKVDYCRVHGFDIFYSNTVLDAEMSGFWTKLPLLRALMLAHPETELLWWVDSDVVFTDMLFEPPWGRYRRHNLVIHGWDGAVYGAKTWLGLNAGSFIIRNCQWSLDLLDAWAPMGPPGPVRDMYGKIFAETLTNRPPYEADDQSALVFLLVTQRHRWGAKVFLENSYNLHGFWADIVDRYEEMRRQWRHPGLGDDRWPLITHFVGCKPCGGDDASYDGERCRRGMDRAFNFADDQILELYGFAHESLDTMAVRRVRNDTGRPLDADNQELGRLLHPTFKARKKKTSRAARPM.

At 1–26 (MSKLQDRHGGEAAADVGRRARHQRLL) the chain is on the cytoplasmic side. A helical; Signal-anchor for type II membrane protein transmembrane segment spans residues 27–47 (LSFPVFPIVLLLLAPCTIFFF). Residues 48–483 (TSGDVPLPRI…KKTSRAARPM (436 aa)) are Lumenal-facing. Residues 71–119 (AVAADTSPPPPSPPSSSPPPLSFPPPPPPPSSPPPPALPVVDDHSDTQR) form a disordered region. A compositionally biased stretch (pro residues) spans 77–108 (SPPPPSPPSSSPPPLSFPPPPPPPSSPPPPAL). N-linked (GlcNAc...) asparagine glycosylation occurs at Asn448.

This sequence belongs to the glycosyltransferase 34 family.

It localises to the golgi apparatus membrane. Its function is as follows. Probable glycosyltransferase that may be involved in the biosynthesis of xyloglucan. The sequence is that of Probable glycosyltransferase 4 from Oryza sativa subsp. indica (Rice).